Reading from the N-terminus, the 246-residue chain is MFRDLKPAYLFCCSVLYAFSVLRPSQGISVSTHHNLHKTVGSDVTLYCGFWSNEYVSDLTTLSWRFRPDNSRDIISIFHYGNGVPYIEKWGQFRGRVEWVGDISKHDGSIVIRNLDYIDNGTFTCDVKNPPDVVGTSSDVHLTVYDKIPPVGAGVVSGAIIGTFLGIILLIVGGLYLFRYIVRRRARSETSFLQRRRSAAERGKVSGKAGTVSKGPVLYATLDQSKSGKGASEKKSKLSESKRDKK.

The signal sequence occupies residues Met1–Gly27. The Ig-like V-type domain maps to Ile28 to Thr143. Residues Ile28–Pro150 lie on the Extracellular side of the membrane. A disulfide bond links Cys48 and Cys125. Residue Asn120 is glycosylated (N-linked (GlcNAc...) (complex) asparagine). A helical membrane pass occupies residues Val151 to Phe178. The Cytoplasmic portion of the chain corresponds to Arg179–Lys246. The segment at Ala200–Lys246 is disordered. Residues Ala231–Lys246 show a composition bias toward basic and acidic residues.

It belongs to the myelin P0 protein family. In terms of processing, N-glycan is sulfated. In terms of tissue distribution, found only in peripheral nervous system Schwann cells.

It is found in the cell membrane. Its function is as follows. Creation of an extracellular membrane face which guides the wrapping process and ultimately compacts adjacent lamellae. This Heterodontus francisci (Horn shark) protein is Myelin protein P0 (mpz).